Consider the following 91-residue polypeptide: Small ribosomal subunit protein uS19 (91 aa).

The protein belongs to the universal ribosomal protein uS19 family.

Its function is as follows. Protein S19 forms a complex with S13 that binds strongly to the 16S ribosomal RNA. This Cupriavidus taiwanensis (strain DSM 17343 / BCRC 17206 / CCUG 44338 / CIP 107171 / LMG 19424 / R1) (Ralstonia taiwanensis (strain LMG 19424)) protein is Small ribosomal subunit protein uS19.